A 430-amino-acid polypeptide reads, in one-letter code: Glucose-6-phosphate isomerase (430 aa).

The active-site Proton donor is the glutamate 284. Active-site residues include histidine 305 and lysine 420.

The protein belongs to the GPI family.

It localises to the cytoplasm. The enzyme catalyses alpha-D-glucose 6-phosphate = beta-D-fructose 6-phosphate. It functions in the pathway carbohydrate biosynthesis; gluconeogenesis. Its pathway is carbohydrate degradation; glycolysis; D-glyceraldehyde 3-phosphate and glycerone phosphate from D-glucose: step 2/4. Its function is as follows. Catalyzes the reversible isomerization of glucose-6-phosphate to fructose-6-phosphate. The polypeptide is Glucose-6-phosphate isomerase (Mycoplasmopsis synoviae (strain 53) (Mycoplasma synoviae)).